We begin with the raw amino-acid sequence, 307 residues long: MIKDKHLIDPMDFTVEELKEIFKLAHEIILDPEKFSHVCDGKILGTLFYEPSTRTRFSFEAAMMRLGGKILGFSEPNSSSASKGESLSDTIKMVSIYTDIIAMRHPKEGSAKVASLYSSVPIINAGDGGHQHPTQTLTDLLTIEMLKDGLSNHTIGICGDLKYGRTVHSLIKAMSRYKGNKFLLISPKELRIPDYIREEILRKNNIEFLEVETLEEVIDKVDILYMTRIQKERFFNEEEYLRLRDSYILNKEKMNLAKDDMIVMHPLPRVNEIACEVDYDKRAAYFKQAEYGMYARMALMAKLLGVL.

Arg54 and Thr55 together coordinate carbamoyl phosphate. Residue Lys83 participates in L-aspartate binding. The carbamoyl phosphate site is built by Arg104, His132, and Gln135. Residues Arg165 and Arg228 each coordinate L-aspartate. Residues Leu267 and Pro268 each contribute to the carbamoyl phosphate site.

The protein belongs to the aspartate/ornithine carbamoyltransferase superfamily. ATCase family. As to quaternary structure, heterododecamer (2C3:3R2) of six catalytic PyrB chains organized as two trimers (C3), and six regulatory PyrI chains organized as three dimers (R2).

The catalysed reaction is carbamoyl phosphate + L-aspartate = N-carbamoyl-L-aspartate + phosphate + H(+). It functions in the pathway pyrimidine metabolism; UMP biosynthesis via de novo pathway; (S)-dihydroorotate from bicarbonate: step 2/3. In terms of biological role, catalyzes the condensation of carbamoyl phosphate and aspartate to form carbamoyl aspartate and inorganic phosphate, the committed step in the de novo pyrimidine nucleotide biosynthesis pathway. In Clostridium botulinum (strain Alaska E43 / Type E3), this protein is Aspartate carbamoyltransferase catalytic subunit.